Here is a 365-residue protein sequence, read N- to C-terminus: Putative F-box protein At1g31000 (365 aa).

The 48-residue stretch at 15–62 folds into the F-box domain; the sequence is NDSDSVRIDIVIEIVKRLPLKDVSRFLLVSKLWSEIIRSPYFIRSFPF.

The polypeptide is Putative F-box protein At1g31000 (Arabidopsis thaliana (Mouse-ear cress)).